A 213-amino-acid chain; its full sequence is Protein nullo (213 aa).

As to expression, blastoderm. Throughout the entire cortex of the embryo although the distribution is not uniform.

In terms of biological role, actin-myosin network stability during cellularization. Might be involved in increasing actin-actin interactions or membrane-to-cytoskeleton attachments. nullo together with Sry-a and bnk may provide auxiliary functions, by acting both to stabilize a large and dynamic microfilament structure and regulate its functions. In Drosophila melanogaster (Fruit fly), this protein is Protein nullo (nullo).